The chain runs to 576 residues: 3-hydroxy-3-methylglutaryl coenzyme A reductase 1 (576 aa).

Residues 1 to 35 (MDSRRRPSKPLLTSSGEVLHRKQASPVTDEDQIHR) form a disordered region. Helical transmembrane passes span 42 to 62 (ALPL…FSVA) and 89 to 109 (AIVS…IDFV). Glutamate 255 functions as the Charge relay system in the catalytic mechanism. An N-linked (GlcNAc...) asparagine glycan is attached at asparagine 319. Residues lysine 387 and aspartate 463 each act as charge relay system in the active site. A helical membrane pass occupies residues 532-552 (LLATIVAGSVLAGELSLMSAI). The active-site Proton donor is histidine 561. Asparagine 565 is a glycosylation site (N-linked (GlcNAc...) asparagine).

The protein belongs to the HMG-CoA reductase family. Expressed in trichomes, leaves, flowers, roots and stems.

Its subcellular location is the endoplasmic reticulum membrane. The protein resides in the plastid. It is found in the chloroplast membrane. It localises to the peroxisome membrane. It carries out the reaction (R)-mevalonate + 2 NADP(+) + CoA = (3S)-3-hydroxy-3-methylglutaryl-CoA + 2 NADPH + 2 H(+). It functions in the pathway metabolic intermediate biosynthesis; (R)-mevalonate biosynthesis; (R)-mevalonate from acetyl-CoA: step 3/3. Catalyzes the synthesis of mevalonate, the specific precursor of all isoprenoid compounds present in plants. Component of the triterpene saponins (e.g. ginsenosides or panaxosides) and phytosterols biosynthetic pathways. Promotes triterpenes accumulation in roots. In Cannabis sativa (Hemp), this protein is 3-hydroxy-3-methylglutaryl coenzyme A reductase 1.